We begin with the raw amino-acid sequence, 459 residues long: Cysteine--tRNA ligase (459 aa).

Residue cysteine 28 coordinates Zn(2+). Residues 30-40 carry the 'HIGH' region motif; the sequence is VTVYDLCHFGH. Cysteine 209, histidine 234, and glutamate 238 together coordinate Zn(2+). The 'KMSKS' region motif lies at 266–270; sequence KMSKS. Lysine 269 serves as a coordination point for ATP.

This sequence belongs to the class-I aminoacyl-tRNA synthetase family. Monomer. The cofactor is Zn(2+).

The protein resides in the cytoplasm. It catalyses the reaction tRNA(Cys) + L-cysteine + ATP = L-cysteinyl-tRNA(Cys) + AMP + diphosphate. The sequence is that of Cysteine--tRNA ligase from Actinobacillus succinogenes (strain ATCC 55618 / DSM 22257 / CCUG 43843 / 130Z).